The primary structure comprises 1088 residues: Protein argonaute 18 (1088 aa).

Residues 1-220 (MASRGGGQHQ…QPPPDLPQAP (220 aa)) are disordered. Gly residues-rich tracts occupy residues 20-30 (GGYGRGGGGGR), 51-86 (YPGG…GQGR), 95-127 (GRGY…GGYH), 135-148 (GRGG…GGGY), 161-182 (ARGG…YGRG), and 191-206 (GRGG…GGGS). Pro residues predominate over residues 211 to 220 (QPPPDLPQAP). Residues 477-574 (TVGYFLNNYG…LPMELCNIVP (98 aa)) form the PAZ domain. In terms of domain architecture, Piwi spans 747–1056 (LLLVVMTDDK…LAFRARFYLT (310 aa)).

It belongs to the argonaute family. Ago subfamily.

Functionally, probably involved in the RNA silencing pathway. May bind to short RNAs such as microRNAs (miRNAs) or short interfering RNAs (siRNAs), and represses the translation of mRNAs which are complementary to them. The protein is Protein argonaute 18 (AGO18) of Oryza sativa subsp. japonica (Rice).